Consider the following 614-residue polypeptide: UvrABC system protein C (614 aa).

Residues 19 to 97 form the GIY-YIG domain; it reads SLPGCYLWKN…IKKYNPKFNV (79 aa). The region spanning 208–243 is the UVR domain; that stretch reads ERLVADLKKAMMDASSKMEYERAGFLKQRIEKINQL.

It belongs to the UvrC family. Interacts with UvrB in an incision complex.

The protein resides in the cytoplasm. The UvrABC repair system catalyzes the recognition and processing of DNA lesions. UvrC both incises the 5' and 3' sides of the lesion. The N-terminal half is responsible for the 3' incision and the C-terminal half is responsible for the 5' incision. In Leptospira biflexa serovar Patoc (strain Patoc 1 / Ames), this protein is UvrABC system protein C.